We begin with the raw amino-acid sequence, 347 residues long: Terpene synthase 2 (347 aa).

4 residues coordinate Mg(2+): D103, N247, S251, and E255. Positions 103–107 match the D(D/E)XX(D/E) motif motif; it reads DDLLE. The NSE motif signature appears at 247–255; sequence NDIFSLKKE. The WxxxxxRY motif motif lies at 329–336; it reads WCSKSTRY.

The protein belongs to the terpene synthase family. The cofactor is Mg(2+).

Terpene synthase that may be involved in the production of volatile terpenoids. Does not show detectable terpene products with either farnesyl diphosphate (FPP) or geranyl diphosphate (GPP). P.polycephalum has a unique biology and these volatile terpenoids could function in internal communication of P.polycephalum, to mark the territory that have been explored, or they may be involved in chemotaxis. This is Terpene synthase 2 from Physarum polycephalum (Slime mold).